A 209-amino-acid chain; its full sequence is Thiamine-phosphate synthase (209 aa).

4-amino-2-methyl-5-(diphosphooxymethyl)pyrimidine contacts are provided by residues 36–40 (QYRDK) and N68. D69 and D87 together coordinate Mg(2+). Residue T106 coordinates 4-amino-2-methyl-5-(diphosphooxymethyl)pyrimidine. Position 133–135 (133–135 (SST)) interacts with 2-[(2R,5Z)-2-carboxy-4-methylthiazol-5(2H)-ylidene]ethyl phosphate. Residue K136 participates in 4-amino-2-methyl-5-(diphosphooxymethyl)pyrimidine binding. Residue G163 coordinates 2-[(2R,5Z)-2-carboxy-4-methylthiazol-5(2H)-ylidene]ethyl phosphate.

Belongs to the thiamine-phosphate synthase family. It depends on Mg(2+) as a cofactor.

The catalysed reaction is 2-[(2R,5Z)-2-carboxy-4-methylthiazol-5(2H)-ylidene]ethyl phosphate + 4-amino-2-methyl-5-(diphosphooxymethyl)pyrimidine + 2 H(+) = thiamine phosphate + CO2 + diphosphate. It carries out the reaction 2-(2-carboxy-4-methylthiazol-5-yl)ethyl phosphate + 4-amino-2-methyl-5-(diphosphooxymethyl)pyrimidine + 2 H(+) = thiamine phosphate + CO2 + diphosphate. It catalyses the reaction 4-methyl-5-(2-phosphooxyethyl)-thiazole + 4-amino-2-methyl-5-(diphosphooxymethyl)pyrimidine + H(+) = thiamine phosphate + diphosphate. Its pathway is cofactor biosynthesis; thiamine diphosphate biosynthesis; thiamine phosphate from 4-amino-2-methyl-5-diphosphomethylpyrimidine and 4-methyl-5-(2-phosphoethyl)-thiazole: step 1/1. Functionally, condenses 4-methyl-5-(beta-hydroxyethyl)thiazole monophosphate (THZ-P) and 2-methyl-4-amino-5-hydroxymethyl pyrimidine pyrophosphate (HMP-PP) to form thiamine monophosphate (TMP). This Pseudomonas aeruginosa (strain LESB58) protein is Thiamine-phosphate synthase.